Here is a 772-residue protein sequence, read N- to C-terminus: Larval serum protein 1 gamma chain (772 aa).

Positions 1-16 are cleaved as a signal peptide; the sequence is MKLTLVILALVACVTA. The N-linked (GlcNAc...) asparagine glycan is linked to N242.

The protein belongs to the hemocyanin family. In terms of assembly, heterohexamer, composed of three subunits, alpha, beta and gamma. As to expression, larval hemolymph.

Its subcellular location is the secreted. It is found in the extracellular space. Functionally, larval storage protein (LSP) which may serve as a store of amino acids for synthesis of adult proteins. This Drosophila melanogaster (Fruit fly) protein is Larval serum protein 1 gamma chain (Lsp1gamma).